The following is a 137-amino-acid chain: MRHYEIVFLVHPDQSEQVPGMIERYTGILTQAGGQIHRLEDWGRRQLAYPIIELHKAHYVLLNVETTAEAVEELETAFRFNDAVLRSMVMRTKAAITEASPMAKAKDERDTRRSSEERAPRAEAAEEVEESAENTAE.

Positions 96-137 are disordered; the sequence is ITEASPMAKAKDERDTRRSSEERAPRAEAAEEVEESAENTAE. Residues 104–124 show a composition bias toward basic and acidic residues; the sequence is KAKDERDTRRSSEERAPRAEA. Residues 125–137 show a composition bias toward acidic residues; it reads AEEVEESAENTAE.

It belongs to the bacterial ribosomal protein bS6 family.

Its function is as follows. Binds together with bS18 to 16S ribosomal RNA. The polypeptide is Small ribosomal subunit protein bS6 (Shewanella halifaxensis (strain HAW-EB4)).